The primary structure comprises 284 residues: uncharacterized protein (284 aa).

A compositionally biased stretch (polar residues) spans 1–27 (MSNLPTSTPVSPSNLAEENPKSNNPES). 2 disordered regions span residues 1 to 29 (MSNL…ESSE) and 248 to 284 (TRDS…LKKK).

This is an uncharacterized protein from Caenorhabditis elegans.